The chain runs to 113 residues: Pro-FMRFamide-related neuropeptide FF (113 aa).

The N-terminal stretch at 1–20 is a signal peptide; that stretch reads MDSRQAAALLVLLLLIDGGC. The propeptide occupies 21–65; sequence AEGPGGQQEDQLSAEEDSEPLPPQDAQTSGSLLHYLLQAMERPGR. The tract at residues 22 to 48 is disordered; it reads EGPGGQQEDQLSAEEDSEPLPPQDAQT. Position 76 is a phenylalanine amide (phenylalanine 76). A propeptide spanning residues 79–92 is cleaved from the precursor; sequence NTQGSWRNEWLSPR. Position 110 is a phenylalanine amide (phenylalanine 110).

This sequence belongs to the FARP (FMRFamide related peptide) family.

The protein localises to the secreted. Its function is as follows. Morphine modulating peptides. Have wide-ranging physiologic effects, including the modulation of morphine-induced analgesia, elevation of arterial blood pressure, and increased somatostatin secretion from the pancreas. Neuropeptide FF potentiates and sensitizes ASIC1 and ASIC3 channels. The protein is Pro-FMRFamide-related neuropeptide FF of Homo sapiens (Human).